Consider the following 313-residue polypeptide: Ribose-phosphate pyrophosphokinase (313 aa).

ATP is bound by residues 37 to 39 (DGE) and 96 to 97 (RQ). Mg(2+) is bound by residues H131 and D170. The active site involves K193. Residues R195, D219, and 223-227 (DTAGT) contribute to the D-ribose 5-phosphate site.

It belongs to the ribose-phosphate pyrophosphokinase family. Class I subfamily. In terms of assembly, homohexamer. The cofactor is Mg(2+).

It localises to the cytoplasm. The catalysed reaction is D-ribose 5-phosphate + ATP = 5-phospho-alpha-D-ribose 1-diphosphate + AMP + H(+). It functions in the pathway metabolic intermediate biosynthesis; 5-phospho-alpha-D-ribose 1-diphosphate biosynthesis; 5-phospho-alpha-D-ribose 1-diphosphate from D-ribose 5-phosphate (route I): step 1/1. In terms of biological role, involved in the biosynthesis of the central metabolite phospho-alpha-D-ribosyl-1-pyrophosphate (PRPP) via the transfer of pyrophosphoryl group from ATP to 1-hydroxyl of ribose-5-phosphate (Rib-5-P). The sequence is that of Ribose-phosphate pyrophosphokinase from Pseudomonas putida (strain ATCC 47054 / DSM 6125 / CFBP 8728 / NCIMB 11950 / KT2440).